Here is a 469-residue protein sequence, read N- to C-terminus: UDP-N-acetylmuramate--L-alanine ligase (469 aa).

An ATP-binding site is contributed by glycine 113 to threonine 119.

This sequence belongs to the MurCDEF family.

The protein localises to the cytoplasm. It catalyses the reaction UDP-N-acetyl-alpha-D-muramate + L-alanine + ATP = UDP-N-acetyl-alpha-D-muramoyl-L-alanine + ADP + phosphate + H(+). The protein operates within cell wall biogenesis; peptidoglycan biosynthesis. Its function is as follows. Cell wall formation. In Sorangium cellulosum (strain So ce56) (Polyangium cellulosum (strain So ce56)), this protein is UDP-N-acetylmuramate--L-alanine ligase.